The sequence spans 146 residues: Hemoglobin subunit beta (146 aa).

N-acetylvaline is present on valine 1. The Globin domain occupies 2-146 (HLTGEEKSTV…VATALAHKYH (145 aa)). Position 44 is a phosphoserine (serine 44). Lysine 59 bears the N6-acetyllysine mark. Heme b is bound at residue histidine 63. Position 82 is an N6-acetyllysine (lysine 82). A heme b-binding site is contributed by histidine 92. An S-nitrosocysteine modification is found at cysteine 93. An N6-acetyllysine modification is found at lysine 144.

The protein belongs to the globin family. In terms of assembly, heterotetramer of two alpha chains and two beta chains. In terms of tissue distribution, red blood cells.

Involved in oxygen transport from the lung to the various peripheral tissues. The protein is Hemoglobin subunit beta (HBB) of Macrotus californicus (Californian leaf-nosed bat).